A 415-amino-acid polypeptide reads, in one-letter code: Beta-1,4-glucuronyltransferase 1 (415 aa).

Topologically, residues 1-8 (MQMSYAIR) are cytoplasmic. The helical; Signal-anchor for type II membrane protein transmembrane segment at 9–36 (CAFYQLLLAALMLVAMLQLLYLSLLSGL) threads the bilayer. Residues 37–415 (HGQEEQDQYF…AKYPNSPRRC (379 aa)) lie on the Lumenal side of the membrane. A glycan (N-linked (GlcNAc...) asparagine) is linked at Asn204. 2 residues coordinate Mn(2+): Asp227 and Asp229. A glycan (N-linked (GlcNAc...) asparagine) is linked at Asn300.

The protein belongs to the glycosyltransferase 49 family. In terms of assembly, interacts with LARGE1 and LARGE2. Requires Mn(2+) as cofactor. In terms of tissue distribution, in the adult, highly expressed in heart, brain, skeletal muscle and kidney and to a lesser extent in placenta, pancreas, spleen, prostate, testis, ovary, small intestine and colon. Very weak expression in lung, liver, thymus and peripheral blood leukocytes. In fetal highly expressed in brain and kidney and to a lesser extent in lung and liver.

It localises to the golgi apparatus membrane. The enzyme catalyses 3-O-[beta-D-Xyl-(1-&gt;4)-Rib-ol-P-Rib-ol-P-3-beta-D-GalNAc-(1-&gt;3)-beta-D-GlcNAc-(1-&gt;4)-(O-6-P-alpha-D-Man)]-Thr-[protein] + UDP-alpha-D-glucuronate = 3-O-[beta-D-GlcA-(1-&gt;3)-beta-D-Xyl-(1-&gt;4)-Rib-ol-P-Rib-ol-P-3-beta-D-GalNAc-(1-&gt;3)-beta-D-GlcNAc-(1-&gt;4)-(O-6-P-alpha-D-Man)]-Thr-[protein] + UDP + H(+). It functions in the pathway protein modification; protein glycosylation. Beta-1,4-glucuronyltransferase involved in O-mannosylation of alpha-dystroglycan (DAG1). Transfers a glucuronic acid (GlcA) residue onto a xylose (Xyl) acceptor to produce the glucuronyl-beta-1,4-xylose-beta disaccharide primer, which is further elongated by LARGE1, during synthesis of phosphorylated O-mannosyl glycan. Phosphorylated O-mannosyl glycan is a carbohydrate structure present in alpha-dystroglycan (DAG1), which is required for binding laminin G-like domain-containing extracellular proteins with high affinity. Required for axon guidance; via its function in O-mannosylation of alpha-dystroglycan (DAG1). This Homo sapiens (Human) protein is Beta-1,4-glucuronyltransferase 1.